We begin with the raw amino-acid sequence, 411 residues long: Serine hydroxymethyltransferase (411 aa).

120 to 122 (GHL) is a binding site for (6S)-5,6,7,8-tetrahydrofolate. Position 225 is an N6-(pyridoxal phosphate)lysine (Lys-225). A (6S)-5,6,7,8-tetrahydrofolate-binding site is contributed by 350 to 352 (SPF).

This sequence belongs to the SHMT family. As to quaternary structure, homodimer. Requires pyridoxal 5'-phosphate as cofactor.

The protein localises to the cytoplasm. It catalyses the reaction (6R)-5,10-methylene-5,6,7,8-tetrahydrofolate + glycine + H2O = (6S)-5,6,7,8-tetrahydrofolate + L-serine. It functions in the pathway one-carbon metabolism; tetrahydrofolate interconversion. It participates in amino-acid biosynthesis; glycine biosynthesis; glycine from L-serine: step 1/1. Functionally, catalyzes the reversible interconversion of serine and glycine with tetrahydrofolate (THF) serving as the one-carbon carrier. This reaction serves as the major source of one-carbon groups required for the biosynthesis of purines, thymidylate, methionine, and other important biomolecules. Also exhibits THF-independent aldolase activity toward beta-hydroxyamino acids, producing glycine and aldehydes, via a retro-aldol mechanism. This chain is Serine hydroxymethyltransferase, found in Lactobacillus gasseri (strain ATCC 33323 / DSM 20243 / BCRC 14619 / CIP 102991 / JCM 1131 / KCTC 3163 / NCIMB 11718 / NCTC 13722 / AM63).